Consider the following 419-residue polypeptide: Gamma-glutamyl phosphate reductase (419 aa).

It belongs to the gamma-glutamyl phosphate reductase family.

The protein localises to the cytoplasm. The enzyme catalyses L-glutamate 5-semialdehyde + phosphate + NADP(+) = L-glutamyl 5-phosphate + NADPH + H(+). It functions in the pathway amino-acid biosynthesis; L-proline biosynthesis; L-glutamate 5-semialdehyde from L-glutamate: step 2/2. In terms of biological role, catalyzes the NADPH-dependent reduction of L-glutamate 5-phosphate into L-glutamate 5-semialdehyde and phosphate. The product spontaneously undergoes cyclization to form 1-pyrroline-5-carboxylate. The sequence is that of Gamma-glutamyl phosphate reductase from Yersinia pseudotuberculosis serotype O:1b (strain IP 31758).